We begin with the raw amino-acid sequence, 534 residues long: Envelope glycoprotein (534 aa).

The signal sequence occupies residues 1 to 34 (MEGPTHPKPSKDKTFSWDLMILVGVLLRLDVGMA). Residues 35–534 (NPSPHQIYNV…SLTSLSEVVL (500 aa)) are Extracellular-facing. 2 N-linked (GlcNAc...) asparagine; by host glycosylation sites follow: Asn43 and Asn58. 2 disulfides stabilise this stretch: Cys115/Cys132 and Cys124/Cys137. Residues 245–279 (AMGPNLVLPDQKPPSRQSQIESRVTPHHSQGNGGT) are disordered. Residues 258 to 274 (PSRQSQIESRVTPHHSQ) show a composition bias toward polar residues. Residues Asn286, Asn322, and Asn327 are each glycosylated (N-linked (GlcNAc...) asparagine; by host). Positions 332–335 (CWLC) match the CXXC motif. 3 N-linked (GlcNAc...) asparagine; by host glycosylation sites follow: Asn351, Asn354, and Asn430. The fusion peptide stretch occupies residues 468-488 (ISLTVALMLGGLTVGGIAAGV). The stretch at 496 to 534 (LETAQFRQLQMAMHTDIQALEESISALEKSLTSLSEVVL) forms a coiled coil.

The mature envelope protein (Env) consists of a trimer of SU-TM heterodimers attached by noncovalent interactions or by a labile interchain disulfide bond. In terms of processing, specific enzymatic cleavages in vivo yield mature proteins. Envelope glycoproteins are synthesized as an inactive precursor that is N-glycosylated and processed likely by host cell furin or by a furin-like protease in the Golgi to yield the mature SU and TM proteins. The cleavage site between SU and TM requires the minimal sequence [KR]-X-[KR]-R.

Its subcellular location is the virion membrane. It is found in the host cell membrane. The surface protein (SU) attaches the virus to the host cell by binding to its receptor. This interaction triggers the refolding of the transmembrane protein (TM) and is thought to activate its fusogenic potential by unmasking its fusion peptide. Fusion occurs at the host cell plasma membrane. Functionally, the transmembrane protein (TM) acts as a class I viral fusion protein. Under the current model, the protein has at least 3 conformational states: pre-fusion native state, pre-hairpin intermediate state, and post-fusion hairpin state. During viral and target cell membrane fusion, the coiled coil regions (heptad repeats) assume a trimer-of-hairpins structure, positioning the fusion peptide in close proximity to the C-terminal region of the ectodomain. The formation of this structure appears to drive apposition and subsequent fusion of viral and target cell membranes. Membranes fusion leads to delivery of the nucleocapsid into the cytoplasm. This Feline sarcoma virus (strain Snyder-Theilen) protein is Envelope glycoprotein (env).